The sequence spans 330 residues: Aspartate--ammonia ligase (330 aa).

This sequence belongs to the class-II aminoacyl-tRNA synthetase family. AsnA subfamily.

Its subcellular location is the cytoplasm. It catalyses the reaction L-aspartate + NH4(+) + ATP = L-asparagine + AMP + diphosphate + H(+). It functions in the pathway amino-acid biosynthesis; L-asparagine biosynthesis; L-asparagine from L-aspartate (ammonia route): step 1/1. In Pectobacterium carotovorum subsp. carotovorum (strain PC1), this protein is Aspartate--ammonia ligase.